Consider the following 105-residue polypeptide: ATP synthase F(0) complex subunit a (105 aa).

Helical transmembrane passes span 14 to 34 (EGTP…SLFI), 47 to 67 (LTAG…LLPM), and 72 to 92 (AILT…VAMI).

Belongs to the ATPase A chain family. As to quaternary structure, component of the ATP synthase complex composed at least of ATP5F1A/subunit alpha, ATP5F1B/subunit beta, ATP5MC1/subunit c (homooctomer), MT-ATP6/subunit a, MT-ATP8/subunit 8, ATP5ME/subunit e, ATP5MF/subunit f, ATP5MG/subunit g, ATP5MK/subunit k, ATP5MJ/subunit j, ATP5F1C/subunit gamma, ATP5F1D/subunit delta, ATP5F1E/subunit epsilon, ATP5PF/subunit F6, ATP5PB/subunit b, ATP5PD/subunit d, ATP5PO/subunit OSCP. ATP synthase complex consists of a soluble F(1) head domain (subunits alpha(3) and beta(3)) - the catalytic core - and a membrane F(0) domain - the membrane proton channel (subunits c, a, 8, e, f, g, k and j). These two domains are linked by a central stalk (subunits gamma, delta, and epsilon) rotating inside the F1 region and a stationary peripheral stalk (subunits F6, b, d, and OSCP). Interacts with DNAJC30; interaction is direct.

It localises to the mitochondrion inner membrane. It catalyses the reaction H(+)(in) = H(+)(out). Functionally, subunit a, of the mitochondrial membrane ATP synthase complex (F(1)F(0) ATP synthase or Complex V) that produces ATP from ADP in the presence of a proton gradient across the membrane which is generated by electron transport complexes of the respiratory chain. ATP synthase complex consist of a soluble F(1) head domain - the catalytic core - and a membrane F(1) domain - the membrane proton channel. These two domains are linked by a central stalk rotating inside the F(1) region and a stationary peripheral stalk. During catalysis, ATP synthesis in the catalytic domain of F(1) is coupled via a rotary mechanism of the central stalk subunits to proton translocation. With the subunit c (ATP5MC1), forms the proton-conducting channel in the F(0) domain, that contains two crucial half-channels (inlet and outlet) that facilitate proton movement from the mitochondrial intermembrane space (IMS) into the matrix. Protons are taken up via the inlet half-channel and released through the outlet half-channel, following a Grotthuss mechanism. The chain is ATP synthase F(0) complex subunit a from Salmo trutta (Brown trout).